We begin with the raw amino-acid sequence, 1435 residues long: Neuropathy target esterase sws (1435 aa).

Topologically, residues 1–35 are lumenal; that stretch reads MDVLELLRVSGSNMYYSTFLADAWCYYISNQITMT. A helical transmembrane segment spans residues 36–56; sequence MYLYCALGVLSMLFIGWFVYF. Residues 57–1435 lie on the Cytoplasmic side of the membrane; sequence KRLARLRLRH…NTNNETKNYL (1379 aa). Residue 176-303 coordinates a nucleoside 3',5'-cyclic phosphate; that stretch reads IFGHFEKPIF…IRVIQVIMIR (128 aa). A compositionally biased stretch (low complexity) spans 361-372; that stretch reads AASGTAGSTHTA. 2 disordered regions span residues 361-405 and 422-452; these read AASG…ELSG and NSYP…QPEV. The segment covering 435-449 has biased composition (polar residues); the sequence is GNLSTRRGSITQQEQ. Position 443 is a phosphoserine (Ser-443). A nucleoside 3',5'-cyclic phosphate is bound by residues 474 to 601 and 590 to 717; these read ELGL…VVRR and IVLD…LSHR. A PNPLA domain is found at 944–1110; it reads LVLGGGGARG…VNNLPGHLWR (167 aa). The GXGXXG signature appears at 948 to 953; the sequence is GGGARG. A GXSXG motif is present at residues 975–979; sequence GVSIG. Catalysis depends on Ser-977, which acts as the Nucleophile. The Proton acceptor role is filled by Asp-1097. The DGA/G signature appears at 1097–1099; the sequence is DGG. Residues 1308-1435 are disordered; sequence MDKATQSTPP…NTNNETKNYL (128 aa). Over residues 1311 to 1322 the composition is skewed to polar residues; the sequence is ATQSTPPLQSKA. Basic and acidic residues-rich tracts occupy residues 1330–1361 and 1393–1424; these read SKEE…RELS and MDKK…KENR. Residues 1425 to 1435 show a composition bias toward polar residues; that stretch reads SNTNNETKNYL.

Belongs to the NTE family. Interacts with Pka-C3; interaction inhibits the catalytic function of Pka-C3 and the esterase activity of sws.

Its subcellular location is the endoplasmic reticulum membrane. It carries out the reaction a 1-acyl-sn-glycero-3-phosphocholine + H2O = sn-glycerol 3-phosphocholine + a fatty acid + H(+). In terms of biological role, phospholipase B that deacylates intracellular phosphatidylcholine (PtdCho), generating glycerophosphocholine (GroPtdCho). This deacylation occurs at both sn-2 and sn-1 positions of PtdCho. Its specific chemical modification by certain organophosphorus (OP) compounds leads to distal axonopathy. Plays a role in the signaling mechanism between neurons and glia that regulates glia wrapping during development of the adult brain. Essential for membrane lipid homeostasis and cell survival in both neurons and glia of the adult brain. In Drosophila persimilis (Fruit fly), this protein is Neuropathy target esterase sws.